An 82-amino-acid chain; its full sequence is MQPIPIVAIVALVVAIIIAIVVWSIVIIEYRKILRQRKIDRLIDRLIERAEDSGNESEGEISALVEMGVEMGHHAPWDVDDL.

Residues 1-7 (MQPIPIV) are Extracellular-facing. A helical membrane pass occupies residues 8–28 (AIVALVVAIIIAIVVWSIVII). At 29–82 (EYRKILRQRKIDRLIDRLIERAEDSGNESEGEISALVEMGVEMGHHAPWDVDDL) the chain is on the cytoplasmic side. Serine 53 and serine 57 each carry phosphoserine; by host CK2.

This sequence belongs to the HIV-1 VPU protein family. Homopentamer. Interacts with host CD4 and BRTC; these interactions induce proteasomal degradation of CD4. Interacts (via transmembrane region) with host BST2 (via transmembrane region); this interaction leads to the degradation of host BST2. Interacts with host FBXW11. Interacts with host AP1M1; this interaction plays a role in the mistrafficking and subsequent degradation of host BST2. Interacts with host RANBP2; this interaction allows Vpu to down-regulate host BLM sumoylation. Phosphorylated by host CK2. This phosphorylation is necessary for interaction with human BTRC and degradation of CD4.

The protein localises to the host membrane. With respect to regulation, ion channel activity is inhibited by hexamethylene amiloride in vitro. In terms of biological role, enhances virion budding by targeting host CD4 and Tetherin/BST2 to proteasome degradation. Degradation of CD4 prevents any unwanted premature interactions between viral Env and its host receptor CD4 in the endoplasmic reticulum. Degradation of antiretroviral protein Tetherin/BST2 is important for virion budding, as BST2 tethers new viral particles to the host cell membrane. Mechanistically, Vpu bridges either CD4 or BST2 to BTRC, a substrate recognition subunit of the Skp1/Cullin/F-box protein E3 ubiquitin ligase, induces their ubiquitination and subsequent proteasomal degradation. The alteration of the E3 ligase specificity by Vpu seems to promote the degradation of host IKBKB, leading to NF-kappa-B down-regulation and subsequent apoptosis. Acts as a viroporin that forms an oligomeric ion channel in membranes. Modulates the host DNA repair mechanisms to promote degradation of nuclear viral cDNA in cells that are already productively infected in order to suppress immune sensing and proviral hyper-integration (superinfection). Manipulates PML-NBs and modulates SUMOylation of host BLM protein thereby enhancing its DNA-end processing activity toward viral unintegrated linear DNA. Also inhibits RAD52-mediated homologous repair of viral cDNA, preventing the generation of dead-end circular forms of single copies of the long terminal repeat and permitting sustained nucleolytic attack. The sequence is that of Protein Vpu from Human immunodeficiency virus type 1 group M subtype B (isolate HXB2) (HIV-1).